The primary structure comprises 85 residues: Putative defensin-like protein 258 (85 aa).

Residues 1–25 (MINVSLKRSLLIFISVITSNIGSEA) form the signal peptide. Disulfide bonds link C57-C75, C63-C82, and C67-C84.

The protein belongs to the DEFL family.

It is found in the secreted. This is Putative defensin-like protein 258 from Arabidopsis thaliana (Mouse-ear cress).